The chain runs to 128 residues: Aspartate 1-decarboxylase (128 aa).

Ser-25 functions as the Schiff-base intermediate with substrate; via pyruvic acid in the catalytic mechanism. Ser-25 is modified (pyruvic acid (Ser)). A substrate-binding site is contributed by Thr-57. Catalysis depends on Tyr-58, which acts as the Proton donor. 73-75 contributes to the substrate binding site; it reads GAA.

It belongs to the PanD family. As to quaternary structure, heterooctamer of four alpha and four beta subunits. The cofactor is pyruvate. Is synthesized initially as an inactive proenzyme, which is activated by self-cleavage at a specific serine bond to produce a beta-subunit with a hydroxyl group at its C-terminus and an alpha-subunit with a pyruvoyl group at its N-terminus.

It is found in the cytoplasm. The catalysed reaction is L-aspartate + H(+) = beta-alanine + CO2. Its pathway is cofactor biosynthesis; (R)-pantothenate biosynthesis; beta-alanine from L-aspartate: step 1/1. In terms of biological role, catalyzes the pyruvoyl-dependent decarboxylation of aspartate to produce beta-alanine. The sequence is that of Aspartate 1-decarboxylase from Caldicellulosiruptor saccharolyticus (strain ATCC 43494 / DSM 8903 / Tp8T 6331).